The sequence spans 184 residues: Ribosome-recycling factor (184 aa).

Residues 141-164 are disordered; the sequence is DEKNGDITEDDLRSQTEDVQKATD.

This sequence belongs to the RRF family.

The protein localises to the cytoplasm. In terms of biological role, responsible for the release of ribosomes from messenger RNA at the termination of protein biosynthesis. May increase the efficiency of translation by recycling ribosomes from one round of translation to another. This is Ribosome-recycling factor from Staphylococcus haemolyticus (strain JCSC1435).